Consider the following 227-residue polypeptide: 2,3-bisphosphoglycerate-dependent phosphoglycerate mutase (227 aa).

Substrate-binding positions include 7–14, 20–21, R59, 86–89, K97, 113–114, and 182–183; these read RHGFSEWN, TG, ERHY, RR, and GN. Residue H8 is the Tele-phosphohistidine intermediate of the active site. The active-site Proton donor/acceptor is E86.

The protein belongs to the phosphoglycerate mutase family. BPG-dependent PGAM subfamily. As to quaternary structure, homodimer.

The enzyme catalyses (2R)-2-phosphoglycerate = (2R)-3-phosphoglycerate. It functions in the pathway carbohydrate degradation; glycolysis; pyruvate from D-glyceraldehyde 3-phosphate: step 3/5. In terms of biological role, catalyzes the interconversion of 2-phosphoglycerate and 3-phosphoglycerate. In Glaesserella parasuis serovar 5 (strain SH0165) (Haemophilus parasuis), this protein is 2,3-bisphosphoglycerate-dependent phosphoglycerate mutase.